The chain runs to 197 residues: Adenylate kinase (197 aa).

Residue 16-21 participates in ATP binding; it reads GAGKGT. Residues 36–65 are NMP; the sequence is STGDILRDHVARGTALGQQAGPLMEAGQLV. AMP is bound by residues Thr-37, Arg-42, 63-65, 90-93, and Gln-97; these read QLV and GFPR. The tract at residues 131–147 is LID; that stretch reads DRGRQAVAEGRAPRADD. Arg-132 contributes to the ATP binding site. The interval 137–158 is disordered; sequence VAEGRAPRADDNEETARKRQQV. The segment covering 141–153 has biased composition (basic and acidic residues); the sequence is RAPRADDNEETAR. Arg-144 and Arg-155 together coordinate AMP. Position 183 (Gly-183) interacts with ATP.

It belongs to the adenylate kinase family. As to quaternary structure, monomer.

It localises to the cytoplasm. It catalyses the reaction AMP + ATP = 2 ADP. It participates in purine metabolism; AMP biosynthesis via salvage pathway; AMP from ADP: step 1/1. In terms of biological role, catalyzes the reversible transfer of the terminal phosphate group between ATP and AMP. Plays an important role in cellular energy homeostasis and in adenine nucleotide metabolism. The sequence is that of Adenylate kinase from Deinococcus radiodurans (strain ATCC 13939 / DSM 20539 / JCM 16871 / CCUG 27074 / LMG 4051 / NBRC 15346 / NCIMB 9279 / VKM B-1422 / R1).